Consider the following 63-residue polypeptide: UPF0337 protein SERP0494 (63 aa).

The interval 1–46 (MAEDKFEQAKGNIKETVGNATDNKELEKDGKGDKASGKAKEAVENV) is disordered. Basic and acidic residues predominate over residues 22–46 (DNKELEKDGKGDKASGKAKEAVENV).

It belongs to the UPF0337 (CsbD) family.

This chain is UPF0337 protein SERP0494, found in Staphylococcus epidermidis (strain ATCC 35984 / DSM 28319 / BCRC 17069 / CCUG 31568 / BM 3577 / RP62A).